The following is a 139-amino-acid chain: D-ribose pyranase (139 aa).

The active-site Proton donor is the His20. Substrate is bound by residues Asp28, His106, and 128–130 (YAN).

It belongs to the RbsD / FucU family. RbsD subfamily. In terms of assembly, homodecamer.

The protein localises to the cytoplasm. The catalysed reaction is beta-D-ribopyranose = beta-D-ribofuranose. It participates in carbohydrate metabolism; D-ribose degradation; D-ribose 5-phosphate from beta-D-ribopyranose: step 1/2. Its function is as follows. Catalyzes the interconversion of beta-pyran and beta-furan forms of D-ribose. This chain is D-ribose pyranase, found in Aliivibrio fischeri (strain MJ11) (Vibrio fischeri).